We begin with the raw amino-acid sequence, 100 residues long: NADH-quinone oxidoreductase subunit K (100 aa).

The next 3 helical transmembrane spans lie at 1–21 (MIGL…GLAG), 28–48 (ILLL…GFVA), and 64–84 (FIIA…ILWF).

The protein belongs to the complex I subunit 4L family. In terms of assembly, NDH-1 is composed of 14 different subunits. Subunits NuoA, H, J, K, L, M, N constitute the membrane sector of the complex.

Its subcellular location is the cell inner membrane. It catalyses the reaction a quinone + NADH + 5 H(+)(in) = a quinol + NAD(+) + 4 H(+)(out). NDH-1 shuttles electrons from NADH, via FMN and iron-sulfur (Fe-S) centers, to quinones in the respiratory chain. The immediate electron acceptor for the enzyme in this species is believed to be ubiquinone. Couples the redox reaction to proton translocation (for every two electrons transferred, four hydrogen ions are translocated across the cytoplasmic membrane), and thus conserves the redox energy in a proton gradient. The chain is NADH-quinone oxidoreductase subunit K from Helicobacter pylori (strain P12).